The chain runs to 233 residues: Synaptogyrin-4 (233 aa).

The MARVEL domain occupies 18–169 (FLRRPKSISR…QAYLAFQDLR (152 aa)). 4 consecutive transmembrane segments (helical) span residues 25–45 (ISRIFGGVFSLVIFSSLLTDG), 66–86 (CSFAVGAGFLSFLSCLVFLAI), 104–124 (LLDFILAVLWAGVWFVAFCFL), and 145–165 (AAIALSFFSVPVWILQAYLAF). Residues 191–233 (SPSSTSPSNPPITGPNSLSYTSSALSPYMTTPKAPRLAMMPDS) form a disordered region. Residues 204 to 219 (GPNSLSYTSSALSPYM) are compositionally biased toward polar residues.

It belongs to the synaptogyrin family.

Its subcellular location is the membrane. This chain is Synaptogyrin-4 (Syngr4), found in Mus musculus (Mouse).